A 193-amino-acid polypeptide reads, in one-letter code: Ion-translocating oxidoreductase complex subunit A (193 aa).

6 helical membrane-spanning segments follow: residues 4-24 (FFFILLSTALVNNVVLVKFLG), 39-59 (IGMGLATTFVLTLAAGASWMV), 71-91 (FLRILSLILVIAAIVQFIEVV), 102-122 (ALGIYLPLITTNCAVLGVALL), 134-154 (LLYGFGSASGFTLVLVIFAGM), and 167-187 (FAGAPIAFISAGLLSMAFMGF).

It belongs to the NqrDE/RnfAE family. The complex is composed of six subunits: RnfA, RnfB, RnfC, RnfD, RnfE and RnfG.

It localises to the cellular chromatophore membrane. Part of a membrane-bound complex that couples electron transfer with translocation of ions across the membrane. The chain is Ion-translocating oxidoreductase complex subunit A from Cereibacter sphaeroides (strain ATCC 17029 / ATH 2.4.9) (Rhodobacter sphaeroides).